Consider the following 306-residue polypeptide: Non-specific ribonucleoside hydrolase RihC (306 aa).

The active site involves His235.

This sequence belongs to the IUNH family. RihC subfamily.

In terms of biological role, hydrolyzes both purine and pyrimidine ribonucleosides with a broad-substrate specificity. The sequence is that of Non-specific ribonucleoside hydrolase RihC from Salmonella enteritidis PT4 (strain P125109).